The chain runs to 242 residues: Succinyl-CoA:3-ketoacid coenzyme A transferase subunit A (242 aa).

A CoA-binding site is contributed by 33-39 (GGFGLCG).

It belongs to the 3-oxoacid CoA-transferase subunit A family. Heterodimer of a subunit A and a subunit B.

The catalysed reaction is a 3-oxo acid + succinyl-CoA = a 3-oxoacyl-CoA + succinate. It participates in bacterial outer membrane biogenesis; lipopolysaccharide biosynthesis. This chain is Succinyl-CoA:3-ketoacid coenzyme A transferase subunit A (lpsI), found in Xanthomonas campestris pv. campestris (strain ATCC 33913 / DSM 3586 / NCPPB 528 / LMG 568 / P 25).